The primary structure comprises 368 residues: Peptide chain release factor 2 (368 aa).

Q250 carries the N5-methylglutamine modification.

It belongs to the prokaryotic/mitochondrial release factor family. Methylated by PrmC. Methylation increases the termination efficiency of RF2.

It is found in the cytoplasm. Its function is as follows. Peptide chain release factor 2 directs the termination of translation in response to the peptide chain termination codons UGA and UAA. In Rickettsia bellii (strain RML369-C), this protein is Peptide chain release factor 2.